The primary structure comprises 489 residues: Serine/threonine-protein kinase BSK2 (489 aa).

A disordered region spans residues 1–30; sequence MGCLHSKTANLPSSDDPSAPNKPESVNGDQ. Residue Gly2 is the site of N-myristoyl glycine attachment. Polar residues predominate over residues 7 to 16; the sequence is KTANLPSSDD. Residues 56 to 322 enclose the Protein kinase domain; the sequence is SCIVSEGGEK…QEEVASHVLM (267 aa). Residues 62 to 70 and Lys84 contribute to the ATP site; that span reads GGEKAPNVV. Residue Asp178 is the Proton acceptor of the active site.

This sequence belongs to the protein kinase superfamily. Ser/Thr protein kinase family. Phosphorylated by BRI1 upon brassinolide (BL) treatment.

The protein localises to the cell membrane. It catalyses the reaction L-seryl-[protein] + ATP = O-phospho-L-seryl-[protein] + ADP + H(+). The enzyme catalyses L-threonyl-[protein] + ATP = O-phospho-L-threonyl-[protein] + ADP + H(+). Probable serine/threonine kinase that acts as a positive regulator of brassinosteroid (BR) signaling downstream of the receptor kinase BRI1. Mediates signal transduction from BRI1 by functioning as substrate of BRI1. This chain is Serine/threonine-protein kinase BSK2, found in Arabidopsis thaliana (Mouse-ear cress).